Consider the following 185-residue polypeptide: Ribosome-recycling factor (185 aa).

Belongs to the RRF family.

The protein localises to the cytoplasm. Its function is as follows. Responsible for the release of ribosomes from messenger RNA at the termination of protein biosynthesis. May increase the efficiency of translation by recycling ribosomes from one round of translation to another. This Pseudomonas aeruginosa (strain LESB58) protein is Ribosome-recycling factor.